Here is an 89-residue protein sequence, read N- to C-terminus: MKKQDLIDMEGIVTESLPNAMFRVCLDNGCQVLTHISGKIRRNYIRILPGDRVRVELSPYDLTKGRIIYRLRNKYPNGISQEVFRSMRD.

An S1-like domain is found at 1–72 (MKKQDLIDME…TKGRIIYRLR (72 aa)).

The protein belongs to the IF-1 family. As to quaternary structure, component of the 30S ribosomal translation pre-initiation complex which assembles on the 30S ribosome in the order IF-2 and IF-3, IF-1 and N-formylmethionyl-tRNA(fMet); mRNA recruitment can occur at any time during PIC assembly.

The protein resides in the plastid. The protein localises to the chloroplast. Its function is as follows. One of the essential components for the initiation of protein synthesis. Stabilizes the binding of IF-2 and IF-3 on the 30S subunit to which N-formylmethionyl-tRNA(fMet) subsequently binds. Helps modulate mRNA selection, yielding the 30S pre-initiation complex (PIC). Upon addition of the 50S ribosomal subunit IF-1, IF-2 and IF-3 are released leaving the mature 70S translation initiation complex. The chain is Translation initiation factor IF-1, chloroplastic from Angiopteris evecta (Mule's foot fern).